The chain runs to 149 residues: Tetracenomycin polyketide synthase protein TcmJ (149 aa).

In terms of domain architecture, Cupin type-2 spans 51–117 (HIELAPGESV…NRGNVPARVV (67 aa)). The tract at residues 127–149 (PELGHVDTEPVPNPAAAPPKVGG) is disordered.

As to quaternary structure, the tetracenomycin polyketide synthase (TCM PKS) is composed of a ketosynthase complex (TcmKL), an acyl carrier protein (TcmM), a cyclase (TcmN) and a probable second cyclase (TcmJ).

The enzyme catalyses 10 malonyl-CoA + 8 H(+) = tetracenomycin F2 + 10 CO2 + 10 CoA + 2 H2O. It participates in antibiotic biosynthesis; tetracenomycin C biosynthesis. In terms of biological role, involved in the biosynthesis of tetracenomycin C (TCM C). Part of a type II polyketide synthase (PKS) that catalyzes the synthesis of tetracenomycin F2 (TCM F2), a precursor of TCM C, from malonyl-CoA. TcmJ, while not absolutely required, greatly increases the tetracenomycin F2 production. It probably acts as a cyclase. The polypeptide is Tetracenomycin polyketide synthase protein TcmJ (Streptomyces glaucescens).